A 339-amino-acid polypeptide reads, in one-letter code: Transcription initiation factor IIB (339 aa).

The TFIIB-type zinc finger occupies 39 to 70; the sequence is EELICPMCGSKNIIKDYERAEIVCETCGCVLQ. C43, C46, C62, and C65 together coordinate Zn(2+). 2 consecutive repeat copies span residues 156-239 and 250-331.

The protein belongs to the TFIIB family.

Stabilizes TBP binding to an archaeal box-A promoter. Also responsible for recruiting RNA polymerase II to the pre-initiation complex (DNA-TBP-TFIIB). This is Transcription initiation factor IIB from Methanothermococcus thermolithotrophicus (Methanococcus thermolithotrophicus).